The primary structure comprises 464 residues: tRNA-2-methylthio-N(6)-dimethylallyladenosine synthase (464 aa).

Residues 1–25 form a disordered region; the sequence is MSDLVPLSRKPAPAAGDPAPSPAAP. An MTTase N-terminal domain is found at 27 to 142; the sequence is RKVYVHTFGC…LPEMVERARG (116 aa). The [4Fe-4S] cluster site is built by C36, C72, C105, C180, C184, and C187. In terms of domain architecture, Radical SAM core spans 166–398; that stretch reads ARGRATAFVT…LAAQRRIAGE (233 aa). One can recognise a TRAM domain in the interval 401–464; it reads AAELGKVVEV…GGSSLSGTLA (64 aa).

This sequence belongs to the methylthiotransferase family. MiaB subfamily. In terms of assembly, monomer. [4Fe-4S] cluster serves as cofactor.

Its subcellular location is the cytoplasm. The catalysed reaction is N(6)-dimethylallyladenosine(37) in tRNA + (sulfur carrier)-SH + AH2 + 2 S-adenosyl-L-methionine = 2-methylsulfanyl-N(6)-dimethylallyladenosine(37) in tRNA + (sulfur carrier)-H + 5'-deoxyadenosine + L-methionine + A + S-adenosyl-L-homocysteine + 2 H(+). In terms of biological role, catalyzes the methylthiolation of N6-(dimethylallyl)adenosine (i(6)A), leading to the formation of 2-methylthio-N6-(dimethylallyl)adenosine (ms(2)i(6)A) at position 37 in tRNAs that read codons beginning with uridine. In Anaeromyxobacter dehalogenans (strain 2CP-C), this protein is tRNA-2-methylthio-N(6)-dimethylallyladenosine synthase.